The chain runs to 211 residues: Mediator of RNA polymerase II transcription subunit 18 (211 aa).

It belongs to the Mediator complex subunit 18 family. As to quaternary structure, component of the Mediator complex.

Its subcellular location is the nucleus. Component of the Mediator complex, a coactivator involved in the regulated transcription of nearly all RNA polymerase II-dependent genes. Mediator functions as a bridge to convey information from gene-specific regulatory proteins to the basal RNA polymerase II transcription machinery. Mediator is recruited to promoters by direct interactions with regulatory proteins and serves as a scaffold for the assembly of a functional preinitiation complex with RNA polymerase II and the general transcription factors. The chain is Mediator of RNA polymerase II transcription subunit 18 (MED18) from Anopheles gambiae (African malaria mosquito).